The sequence spans 156 residues: Small ribosomal subunit protein uS7 (156 aa).

The protein belongs to the universal ribosomal protein uS7 family. Part of the 30S ribosomal subunit. Contacts proteins S9 and S11.

Its function is as follows. One of the primary rRNA binding proteins, it binds directly to 16S rRNA where it nucleates assembly of the head domain of the 30S subunit. Is located at the subunit interface close to the decoding center, probably blocks exit of the E-site tRNA. The chain is Small ribosomal subunit protein uS7 from Sphingopyxis alaskensis (strain DSM 13593 / LMG 18877 / RB2256) (Sphingomonas alaskensis).